Consider the following 374-residue polypeptide: AA14 family lytic polysaccharide monooxygenase B (374 aa).

A signal peptide spans 1–18 (MIPVFLAAIAVFLPLTSG). Asn-31, Asn-49, Asn-94, and Asn-151 each carry an N-linked (GlcNAc...) asparagine glycan. 5 disulfide bridges follow: Cys-85–Cys-108, Cys-127–Cys-154, Cys-171–Cys-176, Cys-178–Cys-200, and Cys-220–Cys-236. 2 N-linked (GlcNAc...) asparagine glycosylation sites follow: Asn-235 and Asn-315. The tract at residues 306 to 374 (ISNATPAPSN…TQSRKMRYVF (69 aa)) is disordered. Positions 313–344 (PSNGSCSSRPPSSPVSSSAASTTTSRSPRPSA) are enriched in low complexity.

It belongs to the polysaccharide monooxygenase AA14 family. The cofactor is Cu(2+).

The protein localises to the secreted. Its function is as follows. Lytic polysaccharide monooxygenase (LPMO) that oxidatively cleaves xylan with both C1 and C4 regioselectivity and that specifically targets the protective shield made by heteroxylans that cover cellulose microfibrils in wood. Catalysis by LPMOs requires the reduction of the active-site copper from Cu(II) to Cu(I) by a reducing agent and H(2)O(2) or O(2) as a cosubstrate. Cleavage occurs only when xylans are bound to cellulose and not when they are in solution. Increases the efficiency of wood saccharification through oxidative cleavage of highly refractory xylan-coated cellulose fibers via synergistic relationship with xylan-active enzymes, xylobiohydrolases and cellobiohydrolases. The chain is AA14 family lytic polysaccharide monooxygenase B from Pycnoporus cinnabarinus (Cinnabar-red polypore).